Here is a 182-residue protein sequence, read N- to C-terminus: Ribosome-recycling factor (182 aa).

It belongs to the RRF family.

The protein localises to the cytoplasm. Functionally, responsible for the release of ribosomes from messenger RNA at the termination of protein biosynthesis. May increase the efficiency of translation by recycling ribosomes from one round of translation to another. The protein is Ribosome-recycling factor of Thermosynechococcus vestitus (strain NIES-2133 / IAM M-273 / BP-1).